A 522-amino-acid chain; its full sequence is Cytochrome b mRNA maturase bI3 (522 aa).

The Mitochondrial matrix segment spans residues 1-31 (MTIRKSNPYLSLVNSYLMDSPQPSSMNYWWN). Positions 1-163 (MTIRKSNPYL…MPFMGGDLVP (163 aa)) are cytochrome b. The helical transmembrane segment at 32-52 (VGSLLGLCLVMQMASGMFLAM) threads the bilayer. At 53-84 (HYSSSMELAFNSVEHMMRDVNAGWLMRYIHAN) the chain is on the mitochondrial intermembrane side. The chain crosses the membrane as a helical span at residues 85–105 (GASFFFMCLYLHMGKALYYGS). Residues 106–110 (YKSPR) are Mitochondrial matrix-facing. A helical membrane pass occupies residues 111-131 (VLVWSMGVMMFMLTMATAFMG). The Mitochondrial intermembrane portion of the chain corresponds to 132–154 (YCLVYGQMSHWGATVITNLLSAM). Residues 155–175 (PFMGGDLVPLSIILSLYLLYI) form a helical membrane-spanning segment. The tract at residues 164 to 522 (LSIILSLYLL…PYMSWHQKEQ (359 aa)) is maturase. The Mitochondrial matrix portion of the chain corresponds to 176-522 (SLKTFMKMIF…PYMSWHQKEQ (347 aa)).

It in the N-terminal section; belongs to the cytochrome b family. The protein in the C-terminal section; belongs to the LAGLIDADG endonuclease family.

Its subcellular location is the mitochondrion inner membrane. In terms of biological role, mitochondrial mRNA maturase required for splicing of intron 3 of the cytochrome b (COB) gene, containing its own coding sequence. The protein is Cytochrome b mRNA maturase bI3 (bI3) of Debaryomyces hansenii (strain ATCC 36239 / CBS 767 / BCRC 21394 / JCM 1990 / NBRC 0083 / IGC 2968) (Yeast).